The chain runs to 90 residues: Defensin-like protein 178 (90 aa).

Residues 1 to 23 (MAKATSSLVVPIIFLVIFALVEQ) form the signal peptide. 4 disulfide bridges follow: Cys27–Cys66, Cys36–Cys55, Cys39–Cys60, and Cys43–Cys62.

It belongs to the DEFL family.

It is found in the secreted. This chain is Defensin-like protein 178 (LCR64), found in Arabidopsis thaliana (Mouse-ear cress).